We begin with the raw amino-acid sequence, 79 residues long: Small ribosomal subunit protein bS18 (79 aa).

Belongs to the bacterial ribosomal protein bS18 family. As to quaternary structure, part of the 30S ribosomal subunit. Forms a tight heterodimer with protein bS6.

Functionally, binds as a heterodimer with protein bS6 to the central domain of the 16S rRNA, where it helps stabilize the platform of the 30S subunit. The sequence is that of Small ribosomal subunit protein bS18 from Ureaplasma urealyticum serovar 10 (strain ATCC 33699 / Western).